Reading from the N-terminus, the 264-residue chain is ATP synthase subunit a (264 aa).

6 helical membrane-spanning segments follow: residues 29–49 (TWHI…LWIF), 90–110 (IAPL…MDMI), 134–154 (DVNI…YYSI), 177–197 (IPVN…SLAL), 208–228 (LIFI…SLGV), and 235–255 (LIFH…LTIV).

It belongs to the ATPase A chain family. As to quaternary structure, F-type ATPases have 2 components, CF(1) - the catalytic core - and CF(0) - the membrane proton channel. CF(1) has five subunits: alpha(3), beta(3), gamma(1), delta(1), epsilon(1). CF(0) has three main subunits: a(1), b(2) and c(9-12). The alpha and beta chains form an alternating ring which encloses part of the gamma chain. CF(1) is attached to CF(0) by a central stalk formed by the gamma and epsilon chains, while a peripheral stalk is formed by the delta and b chains.

It is found in the cell inner membrane. In terms of biological role, key component of the proton channel; it plays a direct role in the translocation of protons across the membrane. The polypeptide is ATP synthase subunit a (Shewanella oneidensis (strain ATCC 700550 / JCM 31522 / CIP 106686 / LMG 19005 / NCIMB 14063 / MR-1)).